A 183-amino-acid polypeptide reads, in one-letter code: Ras-related protein Rap-2a (183 aa).

Gly-10–Ser-17 is a binding site for GTP. The Effector region motif lies at Tyr-32–Tyr-40. Residue Thr-35 is glycosylated ((Microbial infection) O-linked (Glc) threonine; by C.difficile toxin TcdA, and by P.sordellii toxin TcsL). Residues Asp-57–Thr-61 and Asn-116–Asp-119 contribute to the GTP site. 2 S-palmitoyl cysteine lipidation sites follow: Cys-176 and Cys-177. Cys-180 is subject to Cysteine methyl ester. A lipid anchor (S-farnesyl cysteine) is attached at Cys-180. The propeptide at Asn-181 to Gln-183 is removed in mature form.

It belongs to the small GTPase superfamily. Ras family. Interacts (GTP-bound form) with RUNDC3A. Interacts with RGS14; the interaction is GTP-dependent. Interacts with PLCE1. Interacts with ARHGAP29, SGSM1, SGSM2 and SGSM3. Interacts (GTP-bound form preferentially) with TNIK (via the CNH domain); the interaction is direct and recruits RAP2A to the E3 ubiquitin ligase NEDD4. Interacts with MINK1. Interacts (GTP-bound form preferentially) with MAP4K4. Interacts with cytoskeletal actin. In terms of processing, ubiquitinated; undergoes 'Lys-63' monoubiquitination and diubiquitination by NEDD4. Multiple lysine residues are probably modified. Ubiquitination requires TNIK, prevents interaction with effectors and inactivates RAP2A. Ubiquitination by the ECS(RAB40B) complex leads to RAP2A localization to lamellipodia plasma membrane, activation, and regulation of sorting at early endosomes for recycling to the lamellipodia plasma membrane. Post-translationally, palmitoylated. Palmitoylation is required for association with recycling endosome membranes and activation of TNIK. (Microbial infection) Glucosylated at Thr-35 by C.difficile toxin TcdA in the colonic epithelium, and by P.sordellii toxin TcsL in the vascular endothelium.

It is found in the midbody. Its subcellular location is the cell projection. The protein localises to the lamellipodium membrane. It localises to the golgi apparatus. The protein resides in the recycling endosome membrane. It is found in the lysosome. It carries out the reaction GTP + H2O = GDP + phosphate + H(+). Its activity is regulated as follows. Activated by the guanine nucleotide-exchange factors RAPGEF3 and RAPGEF4 in a cAMP-dependent manner. Nucleotide exchange is also specifically stimulated by RAPGEF5, RASGEF1A and RASGEF1B. Small GTP-binding protein which cycles between a GDP-bound inactive and a GTP-bound active form. In its active form interacts with and regulates several effectors including MAP4K4, MINK1 and TNIK. Part of a signaling complex composed of NEDD4, RAP2A and TNIK which regulates neuronal dendrite extension and arborization during development. More generally, it is part of several signaling cascades and regulates cytoskeletal rearrangements, cell migration, cell adhesion and cell spreading. The sequence is that of Ras-related protein Rap-2a from Homo sapiens (Human).